Here is a 302-residue protein sequence, read N- to C-terminus: 4-hydroxy-tetrahydrodipicolinate synthase (302 aa).

Threonine 44 contributes to the pyruvate binding site. Tyrosine 132 functions as the Proton donor/acceptor in the catalytic mechanism. Residue lysine 160 is the Schiff-base intermediate with substrate of the active site. Valine 202 contributes to the pyruvate binding site.

The protein belongs to the DapA family. In terms of assembly, homotetramer; dimer of dimers.

It localises to the cytoplasm. The catalysed reaction is L-aspartate 4-semialdehyde + pyruvate = (2S,4S)-4-hydroxy-2,3,4,5-tetrahydrodipicolinate + H2O + H(+). Its pathway is amino-acid biosynthesis; L-lysine biosynthesis via DAP pathway; (S)-tetrahydrodipicolinate from L-aspartate: step 3/4. Catalyzes the condensation of (S)-aspartate-beta-semialdehyde [(S)-ASA] and pyruvate to 4-hydroxy-tetrahydrodipicolinate (HTPA). This is 4-hydroxy-tetrahydrodipicolinate synthase from Thermomicrobium roseum (strain ATCC 27502 / DSM 5159 / P-2).